Consider the following 254-residue polypeptide: uncharacterized protein (254 aa).

Transmembrane regions (helical) follow at residues 41–61, 64–84, 91–111, 125–145, 146–166, 172–192, 204–224, and 232–252; these read LFVF…IKII, ILQA…EYFF, IYCG…LYIL, LLIS…FVLA, PAAL…LWSF, FILL…IQLL, MIRA…ILTP, and LIMS…LLVL.

Belongs to the TatC family.

The protein resides in the plastid. Its subcellular location is the chloroplast membrane. This is an uncharacterized protein from Pyropia yezoensis (Susabi-nori).